A 239-amino-acid chain; its full sequence is 1-(5-phosphoribosyl)-5-[(5-phosphoribosylamino)methylideneamino] imidazole-4-carboxamide isomerase (239 aa).

The active-site Proton acceptor is the Asp7. The active-site Proton donor is Asp129.

It belongs to the HisA/HisF family.

The protein resides in the cytoplasm. It carries out the reaction 1-(5-phospho-beta-D-ribosyl)-5-[(5-phospho-beta-D-ribosylamino)methylideneamino]imidazole-4-carboxamide = 5-[(5-phospho-1-deoxy-D-ribulos-1-ylimino)methylamino]-1-(5-phospho-beta-D-ribosyl)imidazole-4-carboxamide. It participates in amino-acid biosynthesis; L-histidine biosynthesis; L-histidine from 5-phospho-alpha-D-ribose 1-diphosphate: step 4/9. This chain is 1-(5-phosphoribosyl)-5-[(5-phosphoribosylamino)methylideneamino] imidazole-4-carboxamide isomerase, found in Lactiplantibacillus plantarum (strain ATCC BAA-793 / NCIMB 8826 / WCFS1) (Lactobacillus plantarum).